The primary structure comprises 802 residues: Ras GTPase-activating protein 4 (802 aa).

C2 domains are found at residues 1 to 105 (MAKR…SGWT) and 116 to 232 (VQGE…EGWF). Residues Asp21, Asp27, Asp74, Asp76, Ser79, Asp82, Asp149, Asp155, Asp202, Asp204, Ser207, and Asp210 each coordinate Ca(2+). The region spanning 317 to 545 (GLAKDFLDLL…AQLKDFIMKL (229 aa)) is the Ras-GAP domain. A PH domain is found at 565 to 672 (PPVKEGPLFI…WLSALRKAST (108 aa)). A Btk-type zinc finger spans residues 674–710 (NRGLLRSYHPGIFRGDKWSCCHQKDKTDQGCDKTHSR). Zn(2+)-binding residues include His682, Cys693, Cys694, and Cys704.

Requires Ca(2+) as cofactor. Isoform 2 is expressed in osteoblasts.

It localises to the cytoplasm. The protein localises to the cytosol. The protein resides in the cell membrane. Ca(2+)-dependent Ras GTPase-activating protein, that switches off the Ras-MAPK pathway following a stimulus that elevates intracellular calcium. Functions as an adaptor for Cdc42 and Rac1 during FcR-mediated phagocytosis. Isoform 2 activates the Ras pathway and promotes RANKL shedding by modulating the expression of MMP14. The sequence is that of Ras GTPase-activating protein 4 (Rasa4) from Mus musculus (Mouse).